A 271-amino-acid polypeptide reads, in one-letter code: MPELPEVETTRRGIAPYLVGKRICRVTVRTAKLRLPLQPDLDSILSGRIISAVERRGKYLLVRFTAGTLILHLGMTGNLRLVQADTPPGRHDHLDLVLNSGLCLRLTDPRRFSTIVWTHDDPLRHTLLAKHGPEPLTGDFSGDYLYTKSRGRRITVKQFIMDSRVLAGVGNIYACEALFRAGIHPETPAGALSTTHCLRLADTIKEVLTDAIASGGSTLGDFLVSEGKPGYFPMSFSVYGRNDAPCPGCGAPIRRSRQGGRSTYFCDRCQH.

Residue Pro2 is the Schiff-base intermediate with DNA of the active site. Glu3 functions as the Proton donor in the catalytic mechanism. The active-site Proton donor; for beta-elimination activity is the Lys58. 3 residues coordinate DNA: His91, Arg110, and Arg152. The segment at 237 to 271 adopts an FPG-type zinc-finger fold; the sequence is SVYGRNDAPCPGCGAPIRRSRQGGRSTYFCDRCQH. The active-site Proton donor; for delta-elimination activity is Arg261.

The protein belongs to the FPG family. Monomer. The cofactor is Zn(2+).

The catalysed reaction is Hydrolysis of DNA containing ring-opened 7-methylguanine residues, releasing 2,6-diamino-4-hydroxy-5-(N-methyl)formamidopyrimidine.. It catalyses the reaction 2'-deoxyribonucleotide-(2'-deoxyribose 5'-phosphate)-2'-deoxyribonucleotide-DNA = a 3'-end 2'-deoxyribonucleotide-(2,3-dehydro-2,3-deoxyribose 5'-phosphate)-DNA + a 5'-end 5'-phospho-2'-deoxyribonucleoside-DNA + H(+). Its function is as follows. Involved in base excision repair of DNA damaged by oxidation or by mutagenic agents. Acts as a DNA glycosylase that recognizes and removes damaged bases. Has a preference for oxidized purines, such as 7,8-dihydro-8-oxoguanine (8-oxoG). Has AP (apurinic/apyrimidinic) lyase activity and introduces nicks in the DNA strand. Cleaves the DNA backbone by beta-delta elimination to generate a single-strand break at the site of the removed base with both 3'- and 5'-phosphates. The protein is Formamidopyrimidine-DNA glycosylase of Geotalea uraniireducens (strain Rf4) (Geobacter uraniireducens).